Reading from the N-terminus, the 265-residue chain is Taurine import ATP-binding protein TauB (265 aa).

The ABC transporter domain maps to 7 to 236 (QNLNMIFKTP…MGIDGDLREI (230 aa)). Position 41–48 (41–48 (GPSGCGKT)) interacts with ATP.

Belongs to the ABC transporter superfamily. Taurine importer (TC 3.A.1.17.1) family. The complex is composed of two ATP-binding proteins (TauB), two transmembrane proteins (TauC) and a solute-binding protein (TauA).

The protein localises to the cell inner membrane. The catalysed reaction is taurine(out) + ATP + H2O = taurine(in) + ADP + phosphate + H(+). Functionally, part of the ABC transporter complex TauABC involved in taurine import. Responsible for energy coupling to the transport system. The protein is Taurine import ATP-binding protein TauB of Pelagibacter ubique (strain HTCC1062).